The chain runs to 462 residues: UDP-N-acetylmuramoylalanine--D-glutamate ligase (462 aa).

ATP is bound at residue G125–T131.

It belongs to the MurCDEF family.

The protein localises to the cytoplasm. It carries out the reaction UDP-N-acetyl-alpha-D-muramoyl-L-alanine + D-glutamate + ATP = UDP-N-acetyl-alpha-D-muramoyl-L-alanyl-D-glutamate + ADP + phosphate + H(+). It participates in cell wall biogenesis; peptidoglycan biosynthesis. Functionally, cell wall formation. Catalyzes the addition of glutamate to the nucleotide precursor UDP-N-acetylmuramoyl-L-alanine (UMA). This is UDP-N-acetylmuramoylalanine--D-glutamate ligase from Clostridium acetobutylicum (strain ATCC 824 / DSM 792 / JCM 1419 / IAM 19013 / LMG 5710 / NBRC 13948 / NRRL B-527 / VKM B-1787 / 2291 / W).